A 128-amino-acid polypeptide reads, in one-letter code: UPF0325 protein PMI2289 (128 aa).

This sequence belongs to the UPF0325 family.

The protein is UPF0325 protein PMI2289 of Proteus mirabilis (strain HI4320).